A 252-amino-acid polypeptide reads, in one-letter code: MLTIAGVEFESRLFTGTGKFSSSQLMLESIKASKSQLVTVAMKRIDLKTGADDLLSPLRQAGVRLLPNTSGARNAKEAIFAAELAREMLGTQWVKLEIHPDPKYLMPDAVETLAAAKTLCERGFIVMPYVHADPVLCRRLEEVGCAAVMPLASPIGTNQGLVTEPFIKMIIEQAKVPVVIDAGIGTPSHAAHAMELGADAVLVNTAIASSASPIEMAQCFKDAVDCGRRAFEAGLGRVQTQAVHTSPLTGFL.

The active-site Schiff-base intermediate with DXP is lysine 95. 1-deoxy-D-xylulose 5-phosphate-binding positions include glycine 156, 182 to 183 (AG), and 204 to 205 (NT).

Belongs to the ThiG family. In terms of assembly, homotetramer. Forms heterodimers with either ThiH or ThiS.

It localises to the cytoplasm. It catalyses the reaction [ThiS sulfur-carrier protein]-C-terminal-Gly-aminoethanethioate + 2-iminoacetate + 1-deoxy-D-xylulose 5-phosphate = [ThiS sulfur-carrier protein]-C-terminal Gly-Gly + 2-[(2R,5Z)-2-carboxy-4-methylthiazol-5(2H)-ylidene]ethyl phosphate + 2 H2O + H(+). It participates in cofactor biosynthesis; thiamine diphosphate biosynthesis. Functionally, catalyzes the rearrangement of 1-deoxy-D-xylulose 5-phosphate (DXP) to produce the thiazole phosphate moiety of thiamine. Sulfur is provided by the thiocarboxylate moiety of the carrier protein ThiS. In vitro, sulfur can be provided by H(2)S. This chain is Thiazole synthase, found in Shewanella sp. (strain ANA-3).